We begin with the raw amino-acid sequence, 168 residues long: Crossover junction endodeoxyribonuclease RuvC (168 aa).

Residues aspartate 8, glutamate 68, and aspartate 140 contribute to the active site. Positions 8, 68, and 140 each coordinate Mg(2+).

This sequence belongs to the RuvC family. In terms of assembly, homodimer which binds Holliday junction (HJ) DNA. The HJ becomes 2-fold symmetrical on binding to RuvC with unstacked arms; it has a different conformation from HJ DNA in complex with RuvA. In the full resolvosome a probable DNA-RuvA(4)-RuvB(12)-RuvC(2) complex forms which resolves the HJ. Mg(2+) serves as cofactor.

The protein resides in the cytoplasm. The catalysed reaction is Endonucleolytic cleavage at a junction such as a reciprocal single-stranded crossover between two homologous DNA duplexes (Holliday junction).. The RuvA-RuvB-RuvC complex processes Holliday junction (HJ) DNA during genetic recombination and DNA repair. Endonuclease that resolves HJ intermediates. Cleaves cruciform DNA by making single-stranded nicks across the HJ at symmetrical positions within the homologous arms, yielding a 5'-phosphate and a 3'-hydroxyl group; requires a central core of homology in the junction. The consensus cleavage sequence is 5'-(A/T)TT(C/G)-3'. Cleavage occurs on the 3'-side of the TT dinucleotide at the point of strand exchange. HJ branch migration catalyzed by RuvA-RuvB allows RuvC to scan DNA until it finds its consensus sequence, where it cleaves and resolves the cruciform DNA. In Gluconobacter oxydans (strain 621H) (Gluconobacter suboxydans), this protein is Crossover junction endodeoxyribonuclease RuvC.